An 85-amino-acid polypeptide reads, in one-letter code: NADH-ubiquinone oxidoreductase chain 4L (85 aa).

The next 2 helical transmembrane spans lie at 21–41 (LLVT…LLVY) and 51–71 (FIFL…LVSL).

This sequence belongs to the complex I subunit 4L family.

Its subcellular location is the mitochondrion membrane. The catalysed reaction is a ubiquinone + NADH + 5 H(+)(in) = a ubiquinol + NAD(+) + 4 H(+)(out). In terms of biological role, core subunit of the mitochondrial membrane respiratory chain NADH dehydrogenase (Complex I) that is believed to belong to the minimal assembly required for catalysis. Complex I functions in the transfer of electrons from NADH to the respiratory chain. The immediate electron acceptor for the enzyme is believed to be ubiquinone. The chain is NADH-ubiquinone oxidoreductase chain 4L (ND4L) from Artemia franciscana (Brine shrimp).